A 316-amino-acid polypeptide reads, in one-letter code: Alpha- and gamma-adaptin-binding protein p34 (316 aa).

The disordered stretch occupies residues 198–232 (ASAESCHSEQQEPSPTAERTESLPGHHSGACGSAG). Over residues 222-232 (GHHSGACGSAG) the composition is skewed to low complexity. Ser311 and Ser312 each carry phosphoserine.

Associated with AP-1 and AP-2 complexes.

Its subcellular location is the cytoplasm. It localises to the cytosol. Its function is as follows. May be involved in endocytic recycling of growth factor receptors such as EGFR. This Mus musculus (Mouse) protein is Alpha- and gamma-adaptin-binding protein p34 (Aagab).